Reading from the N-terminus, the 406-residue chain is Bifunctional enzyme IspD/IspF (406 aa).

The interval 1 to 247 (MSLIRVNGEA…AFFFNPAKDT (247 aa)) is 2-C-methyl-D-erythritol 4-phosphate cytidylyltransferase. Residues 248 to 406 (FIGMGFDTHA…HVSMRYKQKL (159 aa)) are 2-C-methyl-D-erythritol 2,4-cyclodiphosphate synthase. Aspartate 254 and histidine 256 together coordinate a divalent metal cation. 4-CDP-2-C-methyl-D-erythritol 2-phosphate contacts are provided by residues 254-256 (DTH) and 280-281 (HS). Histidine 288 contacts a divalent metal cation. 4-CDP-2-C-methyl-D-erythritol 2-phosphate contacts are provided by residues 302 to 304 (DIG), 307 to 311 (FPDND), 378 to 381 (TTME), phenylalanine 385, and lysine 388.

The protein in the N-terminal section; belongs to the IspD/TarI cytidylyltransferase family. IspD subfamily. This sequence in the C-terminal section; belongs to the IspF family. The cofactor is a divalent metal cation.

The enzyme catalyses 2-C-methyl-D-erythritol 4-phosphate + CTP + H(+) = 4-CDP-2-C-methyl-D-erythritol + diphosphate. The catalysed reaction is 4-CDP-2-C-methyl-D-erythritol 2-phosphate = 2-C-methyl-D-erythritol 2,4-cyclic diphosphate + CMP. The protein operates within isoprenoid biosynthesis; isopentenyl diphosphate biosynthesis via DXP pathway; isopentenyl diphosphate from 1-deoxy-D-xylulose 5-phosphate: step 2/6. It functions in the pathway isoprenoid biosynthesis; isopentenyl diphosphate biosynthesis via DXP pathway; isopentenyl diphosphate from 1-deoxy-D-xylulose 5-phosphate: step 4/6. Functionally, bifunctional enzyme that catalyzes the formation of 4-diphosphocytidyl-2-C-methyl-D-erythritol from CTP and 2-C-methyl-D-erythritol 4-phosphate (MEP) (IspD), and catalyzes the conversion of 4-diphosphocytidyl-2-C-methyl-D-erythritol 2-phosphate (CDP-ME2P) to 2-C-methyl-D-erythritol 2,4-cyclodiphosphate (ME-CPP) with a corresponding release of cytidine 5-monophosphate (CMP) (IspF). The polypeptide is Bifunctional enzyme IspD/IspF (Helicobacter pylori (strain HPAG1)).